The sequence spans 394 residues: Elongation factor Tu (394 aa).

The tr-type G domain maps to 10–204 (KPHINIGTIG…AVDDNIPTPE (195 aa)). The segment at 19 to 26 (GHVDHGKT) is G1. 19–26 (GHVDHGKT) provides a ligand contact to GTP. Thr-26 is a binding site for Mg(2+). The tract at residues 60–64 (GITIN) is G2. Residues 81–84 (DCPG) are G3. GTP-binding positions include 81-85 (DCPGH) and 136-139 (NKID). The tract at residues 136–139 (NKID) is G4. Residues 174–176 (SAL) form a G5 region.

It belongs to the TRAFAC class translation factor GTPase superfamily. Classic translation factor GTPase family. EF-Tu/EF-1A subfamily. Monomer.

Its subcellular location is the cytoplasm. It catalyses the reaction GTP + H2O = GDP + phosphate + H(+). In terms of biological role, GTP hydrolase that promotes the GTP-dependent binding of aminoacyl-tRNA to the A-site of ribosomes during protein biosynthesis. This is Elongation factor Tu from Chlamydia abortus (strain DSM 27085 / S26/3) (Chlamydophila abortus).